The sequence spans 133 residues: Ribosome-binding factor A (133 aa).

This sequence belongs to the RbfA family. Monomer. Binds 30S ribosomal subunits, but not 50S ribosomal subunits or 70S ribosomes.

It is found in the cytoplasm. Functionally, one of several proteins that assist in the late maturation steps of the functional core of the 30S ribosomal subunit. Associates with free 30S ribosomal subunits (but not with 30S subunits that are part of 70S ribosomes or polysomes). Required for efficient processing of 16S rRNA. May interact with the 5'-terminal helix region of 16S rRNA. This chain is Ribosome-binding factor A, found in Salmonella typhimurium (strain LT2 / SGSC1412 / ATCC 700720).